A 303-amino-acid polypeptide reads, in one-letter code: Magainins (303 aa).

The first 18 residues, 1-18 (MFKGLFICSLIAVICANA), serve as a signal peptide directing secretion. 13 propeptides span residues 19–26 (LPQPEASA), 33–36 (REVR), 62–72 (DAEAVGPEAFA), 79–82 (REVR), 108–118 (DAEAVGPEAFA), 125–128 (REVR), 154–164 (DAEAVGPEAFA), 171–174 (REVR), 200–210 (DAEAVGPEAFA), 217–220 (REVR), 246–256 (DAEAVGPEAFA), 263–266 (REVR), and 292–303 (DAEAVDDRRWVE).

The protein belongs to the gastrin/cholecystokinin family. Magainin subfamily. Synthesized in the stomach and stored in a novel granular multinucleated cell in the gastric mucosa. It is stored as active, processed peptides in large granules within the granular gland secretions of the skin.

It is found in the secreted. Its function is as follows. Antimicrobial peptides that inhibit the growth of numerous species of bacteria and fungi and induce osmotic lysis of protozoa. Rapidly inactivates channel catfish herpesvirus (ED(50)=48 uM) over a wide temperature range. Magainins are membrane lytic agents. In Xenopus laevis (African clawed frog), this protein is Magainins (magainins).